Consider the following 368-residue polypeptide: MSGSTLGHLFCVTNFGESHGPAIGCVIDGCPPGMSLSEADIQPELDRRRPGTSRHVTQRNEPDAVEILSGVHEGRTTGTPICLLIRNTDQRSKDYGNIVQTFRPGHADYTYWHKYGLRDPRGGGRSSARLTAPMVGAGAVAKKWLKEHHGIAFRGGMAALGEIDIAFEGWQHVPDNPFFAPNASQIGQLEDFMDALRKEGDSVGARIVVEATGVPVGWGEPLFDKLDADIAHVMMGLNAVKGVEIGAGFASVAHRGSMHGDELTPQGFRSNHAGGVLGGISTGQDIRVSIAIKPTSSIRTPRQSIDLQGQPATVETFGRHDPCVGIRATPIAEALLALVLMDHALRHRAQCGDVRLPVAPIAAHLPDA.

NADP(+) is bound by residues R48 and R54. FMN is bound by residues 125–127, 238–239, G278, 293–297, and R319; these read RSS, NA, and KPTSS.

Belongs to the chorismate synthase family. In terms of assembly, homotetramer. It depends on FMNH2 as a cofactor.

It catalyses the reaction 5-O-(1-carboxyvinyl)-3-phosphoshikimate = chorismate + phosphate. Its pathway is metabolic intermediate biosynthesis; chorismate biosynthesis; chorismate from D-erythrose 4-phosphate and phosphoenolpyruvate: step 7/7. Its function is as follows. Catalyzes the anti-1,4-elimination of the C-3 phosphate and the C-6 proR hydrogen from 5-enolpyruvylshikimate-3-phosphate (EPSP) to yield chorismate, which is the branch point compound that serves as the starting substrate for the three terminal pathways of aromatic amino acid biosynthesis. This reaction introduces a second double bond into the aromatic ring system. The chain is Chorismate synthase from Methylibium petroleiphilum (strain ATCC BAA-1232 / LMG 22953 / PM1).